A 416-amino-acid chain; its full sequence is CinA-like protein (416 aa).

The protein belongs to the CinA family.

The polypeptide is CinA-like protein (Syntrophomonas wolfei subsp. wolfei (strain DSM 2245B / Goettingen)).